The primary structure comprises 129 residues: uncharacterized protein (129 aa).

This is an uncharacterized protein from Oryza sativa subsp. indica (Rice).